The primary structure comprises 257 residues: S-methyl-5'-thioadenosine phosphorylase (257 aa).

Residues Ser-10, 50–51 (RH), and 83–84 (TA) contribute to the phosphate site. A substrate-binding site is contributed by Met-180. Thr-181 is a phosphate binding site. Position 204–206 (204–206 (DYD)) interacts with substrate.

It belongs to the PNP/MTAP phosphorylase family. MTAP subfamily. In terms of assembly, homohexamer. Dimer of a homotrimer.

It catalyses the reaction S-methyl-5'-thioadenosine + phosphate = 5-(methylsulfanyl)-alpha-D-ribose 1-phosphate + adenine. The catalysed reaction is adenosine + phosphate = alpha-D-ribose 1-phosphate + adenine. It participates in amino-acid biosynthesis; L-methionine biosynthesis via salvage pathway; S-methyl-5-thio-alpha-D-ribose 1-phosphate from S-methyl-5'-thioadenosine (phosphorylase route): step 1/1. Catalyzes the reversible phosphorylation of S-methyl-5'-thioadenosine (MTA) to adenine and 5-methylthioribose-1-phosphate. Involved in the breakdown of MTA, a major by-product of polyamine biosynthesis. Responsible for the first step in the methionine salvage pathway after MTA has been generated from S-adenosylmethionine. Has broad substrate specificity with 6-aminopurine nucleosides as preferred substrates. Can also use adenosine as substrate to form ribose 1-phosphate. This is S-methyl-5'-thioadenosine phosphorylase from Thermococcus kodakarensis (strain ATCC BAA-918 / JCM 12380 / KOD1) (Pyrococcus kodakaraensis (strain KOD1)).